Here is a 155-residue protein sequence, read N- to C-terminus: Ribosomal RNA large subunit methyltransferase H (155 aa).

Residues Leu72, Gly103, and 122–127 (FGRMVW) each bind S-adenosyl-L-methionine.

Belongs to the RNA methyltransferase RlmH family. As to quaternary structure, homodimer.

Its subcellular location is the cytoplasm. The catalysed reaction is pseudouridine(1915) in 23S rRNA + S-adenosyl-L-methionine = N(3)-methylpseudouridine(1915) in 23S rRNA + S-adenosyl-L-homocysteine + H(+). Its function is as follows. Specifically methylates the pseudouridine at position 1915 (m3Psi1915) in 23S rRNA. The polypeptide is Ribosomal RNA large subunit methyltransferase H (Cereibacter sphaeroides (strain ATCC 17023 / DSM 158 / JCM 6121 / CCUG 31486 / LMG 2827 / NBRC 12203 / NCIMB 8253 / ATH 2.4.1.) (Rhodobacter sphaeroides)).